The primary structure comprises 195 residues: Interferon tau-1 (195 aa).

The signal sequence occupies residues 1-23 (MAFVLSLLMALVLVSYGPGGSLG). 2 disulfides stabilise this stretch: cysteine 24/cysteine 122 and cysteine 52/cysteine 162.

It belongs to the alpha/beta interferon family. IFN-alphaII subfamily. As to expression, constitutively and exclusively expressed in the mononuclear cells of the extraembryonic trophectoderm.

The protein resides in the secreted. Functionally, paracrine hormone primarily responsible for maternal recognition of pregnancy. Interacts with endometrial receptors, probably type I interferon receptors, and blocks estrogen receptor expression, preventing the estrogen-induced increase in oxytocin receptor expression in the endometrium. This results in the suppression of the pulsatile endometrial release of the luteolytic hormone prostaglandin F2-alpha, hindering the regression of the corpus luteum (luteolysis) and therefore a return to ovarian cyclicity. This, and a possible direct effect of IFN-tau on prostaglandin synthesis, leads in turn to continued ovarian progesterone secretion, which stimulates the secretion by the endometrium of the nutrients required for the growth of the conceptus. In summary, displays particularly high antiviral and antiproliferative potency concurrently with particular weak cytotoxicity, high antiluteolytic activity and immunomodulatory properties. In contrast with other IFNs, IFN-tau is not virally inducible. The polypeptide is Interferon tau-1 (IFNT1) (Ovis aries (Sheep)).